The sequence spans 155 residues: Deoxyuridine 5'-triphosphate nucleotidohydrolase (155 aa).

Residues 74–76 (RSG), N87, and 91–93 (LID) contribute to the substrate site.

This sequence belongs to the dUTPase family. It depends on Mg(2+) as a cofactor.

It carries out the reaction dUTP + H2O = dUMP + diphosphate + H(+). The protein operates within pyrimidine metabolism; dUMP biosynthesis; dUMP from dCTP (dUTP route): step 2/2. This enzyme is involved in nucleotide metabolism: it produces dUMP, the immediate precursor of thymidine nucleotides and it decreases the intracellular concentration of dUTP so that uracil cannot be incorporated into DNA. This chain is Deoxyuridine 5'-triphosphate nucleotidohydrolase, found in Xylella fastidiosa (strain M23).